The primary structure comprises 188 residues: UPF0301 protein XCV3063 (188 aa).

This sequence belongs to the UPF0301 (AlgH) family.

The chain is UPF0301 protein XCV3063 from Xanthomonas euvesicatoria pv. vesicatoria (strain 85-10) (Xanthomonas campestris pv. vesicatoria).